The following is a 361-amino-acid chain: Peptide chain release factor 1 (361 aa).

Position 235 is an N5-methylglutamine (Gln235).

It belongs to the prokaryotic/mitochondrial release factor family. In terms of processing, methylated by PrmC. Methylation increases the termination efficiency of RF1.

It is found in the cytoplasm. Functionally, peptide chain release factor 1 directs the termination of translation in response to the peptide chain termination codons UAG and UAA. The protein is Peptide chain release factor 1 of Rhodopseudomonas palustris (strain ATCC BAA-98 / CGA009).